We begin with the raw amino-acid sequence, 96 residues long: Venom protein 3.1 (96 aa).

The first 25 residues, 1–25 (MKFSLISVFLFAVFLSNENIFQAIA), serve as a signal peptide directing secretion. The disordered stretch occupies residues 45-84 (EAVMSSSLTNEEESRNWPHRATRNTLEKGQKRSPAARSEI).

This sequence belongs to the non-disulfide-bridged peptide (NDBP) superfamily. As to expression, expressed by the venom gland.

It is found in the secreted. The chain is Venom protein 3.1 from Lychas mucronatus (Chinese swimming scorpion).